A 304-amino-acid chain; its full sequence is Aspartate carbamoyltransferase catalytic subunit (304 aa).

Residues Arg54 and Thr55 each coordinate carbamoyl phosphate. Lys83 contacts L-aspartate. Residues Arg104, His132, and Gln135 each contribute to the carbamoyl phosphate site. L-aspartate-binding residues include Arg165 and Arg226. Residues Leu265 and Pro266 each contribute to the carbamoyl phosphate site.

This sequence belongs to the aspartate/ornithine carbamoyltransferase superfamily. ATCase family. As to quaternary structure, heterooligomer of catalytic and regulatory chains.

The catalysed reaction is carbamoyl phosphate + L-aspartate = N-carbamoyl-L-aspartate + phosphate + H(+). Its pathway is pyrimidine metabolism; UMP biosynthesis via de novo pathway; (S)-dihydroorotate from bicarbonate: step 2/3. Catalyzes the condensation of carbamoyl phosphate and aspartate to form carbamoyl aspartate and inorganic phosphate, the committed step in the de novo pyrimidine nucleotide biosynthesis pathway. The chain is Aspartate carbamoyltransferase catalytic subunit from Pyrobaculum islandicum (strain DSM 4184 / JCM 9189 / GEO3).